A 155-amino-acid polypeptide reads, in one-letter code: SsrA-binding protein (155 aa).

The protein belongs to the SmpB family.

The protein localises to the cytoplasm. Its function is as follows. Required for rescue of stalled ribosomes mediated by trans-translation. Binds to transfer-messenger RNA (tmRNA), required for stable association of tmRNA with ribosomes. tmRNA and SmpB together mimic tRNA shape, replacing the anticodon stem-loop with SmpB. tmRNA is encoded by the ssrA gene; the 2 termini fold to resemble tRNA(Ala) and it encodes a 'tag peptide', a short internal open reading frame. During trans-translation Ala-aminoacylated tmRNA acts like a tRNA, entering the A-site of stalled ribosomes, displacing the stalled mRNA. The ribosome then switches to translate the ORF on the tmRNA; the nascent peptide is terminated with the 'tag peptide' encoded by the tmRNA and targeted for degradation. The ribosome is freed to recommence translation, which seems to be the essential function of trans-translation. The sequence is that of SsrA-binding protein from Streptococcus pneumoniae (strain Hungary19A-6).